Here is a 340-residue protein sequence, read N- to C-terminus: Cyclic GMP-AMP synthase-like receptor 3 (340 aa).

Residues serine 62 and 74–76 each bind ATP; that span reads EAD. Residues glutamate 74, aspartate 76, and aspartate 177 each coordinate Mg(2+). ATP contacts are provided by residues lysine 241 and 255–259; that span reads SYHLK. Mn(2+) contacts are provided by aspartate 267 and aspartate 270.

It belongs to the mab-21 family. The cofactor is Mg(2+). It depends on Mn(2+) as a cofactor.

It carries out the reaction 2 ATP = 3',3'-c-di-AMP + 2 diphosphate. Its function is as follows. Nucleotidyltransferase that catalyzes the formation of cyclic di-AMP (3',3'-c-di-AMP) from 2 molecules of ATP and plays a key role in innate immunity. Acts as a key sensor of double-stranded RNA (dsRNA), the presence of dsRNA in the cytoplasm being a danger signal that triggers the immune responses. Directly binds dsRNA, activating the nucleotidyltransferase activity, leading to synthesis of 3',3'-c-di-AMP, a second messenger that binds to and activates Sting, thereby triggering the immune response via activation of the NF-kappa-B transcription factor. The protein is Cyclic GMP-AMP synthase-like receptor 3 of Stylophora pistillata (Smooth cauliflower coral).